Consider the following 142-residue polypeptide: Peptide methionine sulfoxide reductase MsrB (142 aa).

One can recognise a MsrB domain in the interval lysine 3–phenylalanine 126. The active-site Nucleophile is the cysteine 115.

It belongs to the MsrB Met sulfoxide reductase family.

The catalysed reaction is L-methionyl-[protein] + [thioredoxin]-disulfide + H2O = L-methionyl-(R)-S-oxide-[protein] + [thioredoxin]-dithiol. This chain is Peptide methionine sulfoxide reductase MsrB, found in Lactococcus lactis subsp. lactis (strain IL1403) (Streptococcus lactis).